The chain runs to 663 residues: UvrABC system protein B (663 aa).

Over residues 1–10 (MIDKRDDKPF) the composition is skewed to basic and acidic residues. Positions 1–23 (MIDKRDDKPFKLKSKYKPSGDQP) are disordered. Residues 31 to 271 (DNIEGGEKAQ…EQSIAKIQAE (241 aa)) enclose the Helicase ATP-binding domain. Residue 44-51 (GATGTGKT) coordinates ATP. The Beta-hairpin motif lies at 97-120 (YYDYYQPEAYVPSSDTYIEKDSSV). The region spanning 435–601 (QMDDLLGEIN…TIKKDIRGLI (167 aa)) is the Helicase C-terminal domain. Residues 627–662 (KEAINALQKQMQEAAELLDFELAAQMRDLILELKLM) enclose the UVR domain.

This sequence belongs to the UvrB family. In terms of assembly, forms a heterotetramer with UvrA during the search for lesions. Interacts with UvrC in an incision complex.

Its subcellular location is the cytoplasm. Its function is as follows. The UvrABC repair system catalyzes the recognition and processing of DNA lesions. A damage recognition complex composed of 2 UvrA and 2 UvrB subunits scans DNA for abnormalities. Upon binding of the UvrA(2)B(2) complex to a putative damaged site, the DNA wraps around one UvrB monomer. DNA wrap is dependent on ATP binding by UvrB and probably causes local melting of the DNA helix, facilitating insertion of UvrB beta-hairpin between the DNA strands. Then UvrB probes one DNA strand for the presence of a lesion. If a lesion is found the UvrA subunits dissociate and the UvrB-DNA preincision complex is formed. This complex is subsequently bound by UvrC and the second UvrB is released. If no lesion is found, the DNA wraps around the other UvrB subunit that will check the other stand for damage. In Streptococcus pyogenes serotype M4 (strain MGAS10750), this protein is UvrABC system protein B.